Reading from the N-terminus, the 449-residue chain is C4-dicarboxylate transport protein (449 aa).

8 helical membrane-spanning segments follow: residues 20–42, 62–84, 91–113, 164–181, 202–224, 239–261, 344–366, and 370–389; these read YLQLYFWVIIAIILGALLGHCYP, IISPVIFLTIVTGIASVAHVGTV, AMVYFLFFSTLALLLGLVVAHVV, ILQVLFVAVLFGIALALA, LVQMLMKMAPIGAFGAIAFTIGK, SFYLTSLLFVLVILGAVSWFSGF, LALFLVAMLSSKGAAGVSGAGFI, and ATLTVVPEVPIAGMALILGV.

This sequence belongs to the dicarboxylate/amino acid:cation symporter (DAACS) (TC 2.A.23) family.

Its subcellular location is the cell inner membrane. Responsible for the transport of dicarboxylates such as succinate, fumarate, and malate from the periplasm across the inner membrane. The chain is C4-dicarboxylate transport protein (dctA) from Xylella fastidiosa (strain 9a5c).